We begin with the raw amino-acid sequence, 403 residues long: Acetate kinase (403 aa).

Residue asparagine 8 participates in Mg(2+) binding. Lysine 15 contacts ATP. A substrate-binding site is contributed by arginine 90. The Proton donor/acceptor role is filled by aspartate 147. Residues 207–211 (HLGSG), 282–284 (DLR), and 330–334 (GVGEN) contribute to the ATP site. Glutamate 384 contributes to the Mg(2+) binding site.

It belongs to the acetokinase family. In terms of assembly, homodimer. Requires Mg(2+) as cofactor. Mn(2+) is required as a cofactor.

It localises to the cytoplasm. It carries out the reaction acetate + ATP = acetyl phosphate + ADP. It functions in the pathway metabolic intermediate biosynthesis; acetyl-CoA biosynthesis; acetyl-CoA from acetate: step 1/2. In terms of biological role, catalyzes the formation of acetyl phosphate from acetate and ATP. Can also catalyze the reverse reaction. This chain is Acetate kinase, found in Exiguobacterium sp. (strain ATCC BAA-1283 / AT1b).